A 251-amino-acid chain; its full sequence is Hydroxyacylglutathione hydrolase (251 aa).

Zn(2+) contacts are provided by His-53, His-55, Asp-57, His-58, His-110, Asp-127, and His-165.

This sequence belongs to the metallo-beta-lactamase superfamily. Glyoxalase II family. Monomer. It depends on Zn(2+) as a cofactor.

It catalyses the reaction an S-(2-hydroxyacyl)glutathione + H2O = a 2-hydroxy carboxylate + glutathione + H(+). It participates in secondary metabolite metabolism; methylglyoxal degradation; (R)-lactate from methylglyoxal: step 2/2. Thiolesterase that catalyzes the hydrolysis of S-D-lactoyl-glutathione to form glutathione and D-lactic acid. The sequence is that of Hydroxyacylglutathione hydrolase from Escherichia coli O6:K15:H31 (strain 536 / UPEC).